Here is a 301-residue protein sequence, read N- to C-terminus: MFFRNLTLFRFPTTLDFSQIDTLLPPVQLKPVGPLEMSSRGFISPFGRDEQEVLSHRLEDFLWLTVGGEDKILPGAVVNDLLERKVAEIEEKEGRRPGGKARKRLKDDLIHELLPRAFVKSSRTDAILDLQHGYIAVNSSSRKSGENVMSEIRGALGSFPALPLNAEVAPRAILTGWIAGEPLPEGLSLGEECEMKDPIEGGAVVKCQHQELRGDEIDKHLEAGKQVTKLALVLDDNLSFVLGDDLVIRKLKFLDGALDQLEHSEDDGARAELDARFALMSAEIRRLFLLLETALKLSKAE.

This sequence belongs to the RdgC family.

The protein localises to the cytoplasm. It localises to the nucleoid. In terms of biological role, may be involved in recombination. The polypeptide is Recombination-associated protein RdgC (Xanthomonas axonopodis pv. citri (strain 306)).